Here is a 415-residue protein sequence, read N- to C-terminus: Carboxypeptidase B (415 aa).

An N-terminal signal peptide occupies residues 1-13 (MLLLLALVSVALA). A propeptide spans 14 to 108 (HASEEHFDGN…LESQFDSHTR (95 aa)) (activation peptide). The 295-residue stretch at 116–410 (KYNKWETIEA…LAVKYIANYV (295 aa)) folds into the Peptidase M14 domain. C171 and C184 form a disulfide bridge. H174 and E177 together coordinate Zn(2+). Residues 174–177 (HARE), R232, and 249–250 (NR) each bind substrate. 2 cysteine pairs are disulfide-bonded: C243–C266 and C257–C271. H302 contributes to the Zn(2+) binding site. Substrate is bound by residues 303-304 (SY) and Y354. E376 (proton donor/acceptor) is an active-site residue.

This sequence belongs to the peptidase M14 family. Requires Zn(2+) as cofactor.

Its subcellular location is the secreted. The protein localises to the zymogen granule lumen. The catalysed reaction is Preferential release of a C-terminal lysine or arginine amino acid.. This chain is Carboxypeptidase B (Cpb1), found in Rattus norvegicus (Rat).